Consider the following 657-residue polypeptide: Wall-associated receptor kinase-like 20 (657 aa).

Residues 1-23 (MEKKRSYYALLIPTLLTVWLACA) form the signal peptide. Residues 24–293 (GHSCARHAKA…KHCKKKKKTV (270 aa)) lie on the Extracellular side of the membrane. Residue N140 is glycosylated (N-linked (GlcNAc...) asparagine). Residues 294–314 (VFAGAAVAVVGVTLAIAVAVI) form a helical membrane-spanning segment. Over 315-657 (GTKHSHQKVK…NILSQEVTET (343 aa)) the chain is Cytoplasmic. A Protein kinase domain is found at 363–646 (FSKDNLIGTG…KEVADEIEYI (284 aa)). Residues 369-377 (IGTGGFGEV) and K391 each bind ATP. D490 functions as the Proton acceptor in the catalytic mechanism.

It belongs to the protein kinase superfamily. Ser/Thr protein kinase family.

The protein localises to the membrane. It carries out the reaction L-seryl-[protein] + ATP = O-phospho-L-seryl-[protein] + ADP + H(+). The catalysed reaction is L-threonyl-[protein] + ATP = O-phospho-L-threonyl-[protein] + ADP + H(+). Functionally, serine/threonine-protein kinase that may function as a signaling receptor of extracellular matrix component. The chain is Wall-associated receptor kinase-like 20 (WAKL20) from Arabidopsis thaliana (Mouse-ear cress).